Here is a 503-residue protein sequence, read N- to C-terminus: Nondiscriminating glutamyl-tRNA synthetase EARS2, mitochondrial (503 aa).

A mitochondrion-targeting transit peptide spans 1–22 (MKILRGVSRQMCTSRPEVRVRF). Residue 21–23 (RFA) coordinates L-glutamate. The 'HIGH' region motif lies at 26–34 (PTGFLHLGG). His31 contacts ATP. Residues Glu57, 209 to 213 (YHLAS), and Arg227 each bind L-glutamate. ATP contacts are provided by residues Glu230 and 265-269 (KLSKR). A 'KMSKS' region motif is present at residues 265–269 (KLSKR).

Belongs to the class-I aminoacyl-tRNA synthetase family. Glutamate--tRNA ligase type 1 subfamily.

It is found in the mitochondrion matrix. It catalyses the reaction tRNA(Glx) + L-glutamate + ATP = L-glutamyl-tRNA(Glx) + AMP + diphosphate. It carries out the reaction tRNA(Glu) + L-glutamate + ATP = L-glutamyl-tRNA(Glu) + AMP + diphosphate. The catalysed reaction is tRNA(Gln) + L-glutamate + ATP = L-glutamyl-tRNA(Gln) + AMP + diphosphate. Functionally, non-discriminating glutamyl-tRNA synthetase that catalyzes aminoacylation of both mitochondrial tRNA(Glu) and tRNA(Gln) and participates in RNA aminoacylation for mitochondrial protein translation. Attachs glutamate to tRNA(Glu) or tRNA(Gln) in a two-step reaction: glutamate is first activated by ATP to form Glu-AMP and then transferred to the acceptor end of tRNA(Glu) or tRNA(Gln). The sequence is that of Nondiscriminating glutamyl-tRNA synthetase EARS2, mitochondrial from Danio rerio (Zebrafish).